Reading from the N-terminus, the 207-residue chain is Large ribosomal subunit protein uL4 (207 aa).

The segment at 50–75 (KTKTVSEVSGTTKKPFKQKGTGNARQ) is disordered.

Belongs to the universal ribosomal protein uL4 family. In terms of assembly, part of the 50S ribosomal subunit.

Its function is as follows. One of the primary rRNA binding proteins, this protein initially binds near the 5'-end of the 23S rRNA. It is important during the early stages of 50S assembly. It makes multiple contacts with different domains of the 23S rRNA in the assembled 50S subunit and ribosome. In terms of biological role, forms part of the polypeptide exit tunnel. This is Large ribosomal subunit protein uL4 from Rickettsia felis (strain ATCC VR-1525 / URRWXCal2) (Rickettsia azadi).